The following is a 157-amino-acid chain: Protein snakeskin (157 aa).

Residues 2 to 6 (VSVQT) lie on the Cytoplasmic side of the membrane. A helical membrane pass occupies residues 7–27 (IATIVVKTFKIVLNIIILVLY). Topologically, residues 28–53 (RTGYNGEFLGVGGTWNLNEEKNPDAE) are extracellular. A helical membrane pass occupies residues 54–74 (IVASGVIVGYLIYTLVQIVTF). The Cytoplasmic portion of the chain corresponds to 75 to 87 (LFGTTEHKRALSE). The chain crosses the membrane as a helical span at residues 88–108 (IVMNFVGVFLWIAVGAVALHY). Residues 109-130 (WGGYQGEHQFQFVFAEKQVGLA) are Extracellular-facing. A helical membrane pass occupies residues 131-151 (VGALCVINGAIYLLDTALSVI). Residues 152–157 (HFTKEM) are Cytoplasmic-facing.

Expressed in midgut epithelium (at protein level).

It localises to the apicolateral cell membrane. Its subcellular location is the cell junction. The protein resides in the septate junction. Its function is as follows. Required for assembly of smooth septate junctions (sSJs). May be important for barrier function of the midgut epithelium. The polypeptide is Protein snakeskin (Bombyx mori (Silk moth)).